A 182-amino-acid chain; its full sequence is Transcription termination/antitermination protein NusG (182 aa).

The KOW domain occupies 131-161 (GEVVRVNEGPFADFNGTVEEVDYEKSRLKVS).

The protein belongs to the NusG family.

In terms of biological role, participates in transcription elongation, termination and antitermination. The protein is Transcription termination/antitermination protein NusG of Vibrio parahaemolyticus serotype O3:K6 (strain RIMD 2210633).